Consider the following 465-residue polypeptide: Transcriptional protein swt1 (465 aa).

The 121-residue stretch at 70 to 190 (GLFVLDTNFL…LLSDDKNLSI (121 aa)) folds into the PINc domain.

It belongs to the SWT1 family.

The protein resides in the cytoplasm. Its subcellular location is the nucleus. In terms of biological role, involved in transcription. The protein is Transcriptional protein swt1 of Schizosaccharomyces pombe (strain 972 / ATCC 24843) (Fission yeast).